The primary structure comprises 191 residues: Small ribosomal subunit protein eS7z (191 aa).

Residue methionine 1 is modified to N-acetylmethionine. A coiled-coil region spans residues 15 to 50; the sequence is ELSELDEQVAQAFFDLENTNQELKSELKDLYVNSAV.

It belongs to the eukaryotic ribosomal protein eS7 family.

This chain is Small ribosomal subunit protein eS7z (RPS7A), found in Arabidopsis thaliana (Mouse-ear cress).